Reading from the N-terminus, the 191-residue chain is 2-amino-4-hydroxy-6-hydroxymethyldihydropteridine pyrophosphokinase (191 aa).

Belongs to the HPPK family.

It catalyses the reaction 6-hydroxymethyl-7,8-dihydropterin + ATP = (7,8-dihydropterin-6-yl)methyl diphosphate + AMP + H(+). Its pathway is cofactor biosynthesis; tetrahydrofolate biosynthesis; 2-amino-4-hydroxy-6-hydroxymethyl-7,8-dihydropteridine diphosphate from 7,8-dihydroneopterin triphosphate: step 4/4. Its function is as follows. Catalyzes the transfer of pyrophosphate from adenosine triphosphate (ATP) to 6-hydroxymethyl-7,8-dihydropterin, an enzymatic step in folate biosynthesis pathway. In Mycobacterium leprae (strain TN), this protein is 2-amino-4-hydroxy-6-hydroxymethyldihydropteridine pyrophosphokinase (folK).